A 206-amino-acid chain; its full sequence is Platelet glycoprotein Ib beta chain (206 aa).

Positions 1-25 (MGSGPRGALSLLLLLLAPPSRPAAG) are cleaved as a signal peptide. Intrachain disulfides connect cysteine 26/cysteine 32 and cysteine 30/cysteine 39. Residues 27–55 (PAPCSCAGTLVDCGRRGLTWASLPTAFPV) enclose the LRRNT domain. At 27-147 (PAPCSCAGTL…RAACAPGPLC (121 aa)) the chain is on the extracellular side. The LRR repeat unit spans residues 60 to 83 (LVLTGNNLTALPPGLLDALPALRT). Asparagine 66 carries N-linked (GlcNAc...) asparagine glycosylation. Residues 89–143 (NPWRCDCRLVPLRAWLAGRPERAPYRDLRCVAPPALRGRLLPYLAEDELRAACAP) form the LRRCT domain. 2 disulfides stabilise this stretch: cysteine 93-cysteine 118 and cysteine 95-cysteine 141. The chain crosses the membrane as a helical span at residues 148 to 172 (WGALAAQLALLGLGLLHALLLVLLL). Over 173-206 (CRLRRLRARARARAAARLSLTDPLVAERAGTDES) the chain is Cytoplasmic. Position 191 is a phosphoserine; by PKA (serine 191). Threonine 193 is modified (phosphothreonine).

In terms of assembly, two GP-Ib beta are disulfide-linked to one GP-Ib alpha. GP-IX is complexed with the GP-Ib heterodimer via a non covalent linkage. Interacts with TRAF4. As to expression, expressed in heart and brain.

The protein localises to the membrane. Its function is as follows. Gp-Ib, a surface membrane protein of platelets, participates in the formation of platelet plugs by binding to von Willebrand factor, which is already bound to the subendothelium. This chain is Platelet glycoprotein Ib beta chain (GP1BB), found in Homo sapiens (Human).